A 372-amino-acid polypeptide reads, in one-letter code: MEKELRIIISGGGTGGHIFPAVSIANAIIELRPDAKILFVGAEGRMEMQRVPDAGYKIIGLPIAGFDRKHLWKNVSVLIKLARSQWKARSIIKNFRPQVAVGVGGYASGPTLKTAGMMGVPTLIQEQNSYAGVTNKLLAQKAKAICVAYDGMEKFFPADKIIMTGNPVRQNLTKDMPEKGAALRSFNLQPDKKTILIVGGSLGARTINNTLTAALATIKENNDIQFIWQTGKYYYPQVTEAVRAAGELPNLYVTDFIKDMAAAYAASDLVISRAGAGSISEFCLLHKPVVLVPSPNVAEDHQTKNALALVDKQAAIYVKDSEAEAKLMDVALNTVADDRKLKELSENIAKLALPDSARIIAQEVIKLAEAEN.

UDP-N-acetyl-alpha-D-glucosamine is bound by residues 14 to 16 (TGG), Asn128, Arg169, Ser201, Ile257, and Gln302.

It belongs to the glycosyltransferase 28 family. MurG subfamily.

The protein localises to the cell inner membrane. It carries out the reaction di-trans,octa-cis-undecaprenyl diphospho-N-acetyl-alpha-D-muramoyl-L-alanyl-D-glutamyl-meso-2,6-diaminopimeloyl-D-alanyl-D-alanine + UDP-N-acetyl-alpha-D-glucosamine = di-trans,octa-cis-undecaprenyl diphospho-[N-acetyl-alpha-D-glucosaminyl-(1-&gt;4)]-N-acetyl-alpha-D-muramoyl-L-alanyl-D-glutamyl-meso-2,6-diaminopimeloyl-D-alanyl-D-alanine + UDP + H(+). It participates in cell wall biogenesis; peptidoglycan biosynthesis. Its function is as follows. Cell wall formation. Catalyzes the transfer of a GlcNAc subunit on undecaprenyl-pyrophosphoryl-MurNAc-pentapeptide (lipid intermediate I) to form undecaprenyl-pyrophosphoryl-MurNAc-(pentapeptide)GlcNAc (lipid intermediate II). This Bacteroides thetaiotaomicron (strain ATCC 29148 / DSM 2079 / JCM 5827 / CCUG 10774 / NCTC 10582 / VPI-5482 / E50) protein is UDP-N-acetylglucosamine--N-acetylmuramyl-(pentapeptide) pyrophosphoryl-undecaprenol N-acetylglucosamine transferase.